Here is a 513-residue protein sequence, read N- to C-terminus: GMP synthase [glutamine-hydrolyzing] (513 aa).

In terms of domain architecture, Glutamine amidotransferase type-1 spans 9–198; that stretch reads MILVLDFGSQ…VRRICDCTGE (190 aa). Residue C86 is the Nucleophile of the active site. Residues H172 and E174 contribute to the active site. One can recognise a GMPS ATP-PPase domain in the interval 199–388; it reads WTMENFIDLE…LGIPEHLVWR (190 aa). 226 to 232 contributes to the ATP binding site; that stretch reads SGGVDSS.

As to quaternary structure, homodimer.

The catalysed reaction is XMP + L-glutamine + ATP + H2O = GMP + L-glutamate + AMP + diphosphate + 2 H(+). The protein operates within purine metabolism; GMP biosynthesis; GMP from XMP (L-Gln route): step 1/1. Functionally, catalyzes the synthesis of GMP from XMP. The sequence is that of GMP synthase [glutamine-hydrolyzing] from Staphylococcus carnosus (strain TM300).